We begin with the raw amino-acid sequence, 510 residues long: NAD(P)H-quinone oxidoreductase subunit 2 A, chloroplastic (510 aa).

13 helical membrane-spanning segments follow: residues 24–44 (LLLFDGSLIFPECILIFGLIL), 57–77 (IPWLYFISSTSLVMSITALLF), 99–119 (IFQFLILLCSTLCIPLSVEYI), 124–144 (MAITEFLLFVLTATLGGMFLC), 149–169 (LITIFVAPECFSLCSYLLSGY), 183–203 (YLLMGGASSSILVHGFSWLYG), 227–247 (PGISIALIFITVGIGFKLSPA), 295–315 (WHLLLEILAILSMILGNLIAI), 323–343 (MLAYSSIGQIGYVIIGIIVGD), 354–374 (YMLFYISMNLGTFACIVLFGL), 395–415 (ALSLALCLLSLGGLPPLAGFF), 418–438 (LYLFWCGWQAGLYFLVLIGLL), and 484–504 (MIVCVIASTIPGISMNPIIAI).

The protein belongs to the complex I subunit 2 family. In terms of assembly, NDH is composed of at least 16 different subunits, 5 of which are encoded in the nucleus.

The protein localises to the plastid. It localises to the chloroplast thylakoid membrane. The enzyme catalyses a plastoquinone + NADH + (n+1) H(+)(in) = a plastoquinol + NAD(+) + n H(+)(out). The catalysed reaction is a plastoquinone + NADPH + (n+1) H(+)(in) = a plastoquinol + NADP(+) + n H(+)(out). NDH shuttles electrons from NAD(P)H:plastoquinone, via FMN and iron-sulfur (Fe-S) centers, to quinones in the photosynthetic chain and possibly in a chloroplast respiratory chain. The immediate electron acceptor for the enzyme in this species is believed to be plastoquinone. Couples the redox reaction to proton translocation, and thus conserves the redox energy in a proton gradient. The protein is NAD(P)H-quinone oxidoreductase subunit 2 A, chloroplastic of Solanum lycopersicum (Tomato).